The following is a 1256-amino-acid chain: Splicing factor, arginine/serine-rich 19 (1256 aa).

Disordered stretches follow at residues 1–33 (MEEEDESRGKTEESGEDRGDGPPDRDPALSPSA), 158–343 (GKTV…APRR), 371–395 (ALSLPPLPPTDPEIEEGEIVQPEEE), 408–1030 (PRQP…TLPP), 1112–1152 (GSLP…DKYL), and 1221–1256 (FRKHGRKPGDPPGPPRPPKEPGPPDKGGPGLPLPPL). The segment covering 7–27 (SRGKTEESGEDRGDGPPDRDP) has biased composition (basic and acidic residues). Positions 192 to 206 (SSASSSPSPSPSSSS) are enriched in low complexity. Over residues 207-222 (PSPPPPPPPPPPPALP) the composition is skewed to pro residues. The segment covering 227-236 (DIYDPFHPTD) has biased composition (basic and acidic residues). Phosphoserine is present on S240. Residues 255 to 265 (TGSNPSSSAGT) show a composition bias toward polar residues. Residues 268 to 282 (PEEEEEEEEEEEEEG) are compositionally biased toward acidic residues. The residue at position 328 (T328) is a Phosphothreonine. A compositionally biased stretch (acidic residues) spans 382–393 (PEIEEGEIVQPE). Positions 412–424 (PASVATLASVAAP) are enriched in low complexity. 2 positions are modified to phosphoserine: S442 and S447. A compositionally biased stretch (basic residues) spans 478 to 489 (KILTQRRERYRQ). Residues S491, S493, S510, S518, and S520 each carry the phosphoserine modification. Composition is skewed to basic residues over residues 538-553 (TARRRSRSRSRRRSRS) and 560-577 (RGGHRSRSREKRRRRRRS). Phosphoserine occurs at positions 577 and 579. Residues 592–611 (RERHRGKRREGGKKKKKRSR) are compositionally biased toward basic residues. Residues 612 to 623 (SRAEKRSGDLEK) are compositionally biased toward basic and acidic residues. At T663 the chain carries Phosphothreonine. Residues S676 and S682 each carry the phosphoserine modification. Residue Y689 is modified to Phosphotyrosine. 2 positions are modified to phosphoserine: S691 and S695. Composition is skewed to basic and acidic residues over residues 696-709 (ADERGGKSDKDRRR) and 719-741 (SREKGSRRKALDGDRGRDRDRSS). 2 stretches are compositionally biased toward low complexity: residues 752 to 775 (PGSGPLPKAPPSSGSSSSSSSCSS) and 793 to 804 (SSTTPAKDSSSS). Residue K812 forms a Glycyl lysine isopeptide (Lys-Gly) (interchain with G-Cter in SUMO2) linkage. The segment covering 813–831 (FSRDRESRSPFLKPDERAP) has biased composition (basic and acidic residues). S819 and S821 each carry phosphoserine. A compositionally biased stretch (basic residues) spans 843 to 875 (KPKKTKAKAKAGAKKAKGTKGKTKPSKTRKKVR). Phosphoserine is present on residues S876, S883, S910, and S912. Positions 922-935 (STPPPKVAPPPPAL) are enriched in pro residues. Phosphothreonine is present on residues T923 and T936. The segment covering 938–947 (DSQTVDSSCK) has biased composition (polar residues). Position 939 is a phosphoserine (S939). T948 is modified (phosphothreonine). Over residues 969–984 (EEEEEEEEEEEEEEEQ) the composition is skewed to acidic residues. Positions 985 to 1017 (QPATTTATSTAAAAPSTAPSAGSTAGDSGAEDG) are enriched in low complexity. A necessary for interaction with the CTD domain of POLR2A region spans residues 1131 to 1256 (PASDKREGSS…GGPGLPLPPL (126 aa)). A compositionally biased stretch (basic and acidic residues) spans 1133-1152 (SDKREGSSSSEGRGDTDKYL). Residues 1244–1256 (PDKGGPGLPLPPL) show a composition bias toward pro residues.

The protein belongs to the splicing factor SR family. In terms of assembly, interacts with POLR2A.

It is found in the nucleus. In terms of biological role, may function in pre-mRNA splicing. The protein is Splicing factor, arginine/serine-rich 19 (Scaf1) of Mus musculus (Mouse).